A 460-amino-acid chain; its full sequence is Chromosomal replication initiator protein DnaA (460 aa).

The domain I, interacts with DnaA modulators stretch occupies residues 1 to 91 (MNLTSPKVST…SLWQSEDKSI (91 aa)). Positions 91 to 122 (IRSIDIQVIEERNSNFNVILKNREESNHNLGS) are domain II. A domain III, AAA+ region region spans residues 123–342 (PLDPRFTFDN…GALNKVTHTS (220 aa)). ATP-binding residues include G169, G171, K172, and T173. The domain IV, binds dsDNA stretch occupies residues 343–460 (LIGRSMTVES…EINRLKKMFK (118 aa)).

Belongs to the DnaA family. As to quaternary structure, oligomerizes as a right-handed, spiral filament on DNA at oriC.

Its subcellular location is the cytoplasm. Plays an essential role in the initiation and regulation of chromosomal replication. ATP-DnaA binds to the origin of replication (oriC) to initiate formation of the DNA replication initiation complex once per cell cycle. Binds the DnaA box (a 9 base pair repeat at the origin) and separates the double-stranded (ds)DNA. Forms a right-handed helical filament on oriC DNA; dsDNA binds to the exterior of the filament while single-stranded (ss)DNA is stabiized in the filament's interior. The ATP-DnaA-oriC complex binds and stabilizes one strand of the AT-rich DNA unwinding element (DUE), permitting loading of DNA polymerase. After initiation quickly degrades to an ADP-DnaA complex that is not apt for DNA replication. Binds acidic phospholipids. This chain is Chromosomal replication initiator protein DnaA, found in Wolbachia pipientis wMel.